The following is a 755-amino-acid chain: Polyribonucleotide nucleotidyltransferase (755 aa).

Mg(2+) contacts are provided by Asp-545 and Asp-551. A KH domain is found at 611–670; sequence PRITAITVPVNKIGEVIGPKGKTINSITEETGANISIEEDGTVYVSAASGAAAEAAIEKI. One can recognise an S1 motif domain in the interval 682–751; that stretch reads GERFLGTVVK…NRGKISLAPV (70 aa).

It belongs to the polyribonucleotide nucleotidyltransferase family. Mg(2+) serves as cofactor.

It is found in the cytoplasm. It catalyses the reaction RNA(n+1) + phosphate = RNA(n) + a ribonucleoside 5'-diphosphate. Functionally, involved in mRNA degradation. Catalyzes the phosphorolysis of single-stranded polyribonucleotides processively in the 3'- to 5'-direction. This is Polyribonucleotide nucleotidyltransferase from Corynebacterium diphtheriae (strain ATCC 700971 / NCTC 13129 / Biotype gravis).